The chain runs to 482 residues: Malvidin galactosylase UGT88C3 (482 aa).

Histidine 16 serves as the catalytic Proton acceptor. The active-site Charge relay is aspartate 117. 7 residues coordinate UDP: serine 279, tryptophan 345, alanine 349, histidine 366, asparagine 370, serine 371, and glutamate 374.

This sequence belongs to the UDP-glycosyltransferase family.

It is found in the endoplasmic reticulum. The protein resides in the nucleus. It carries out the reaction malvidin + UDP-alpha-D-galactose = malvidin 3-O-beta-D-galactoside + UDP + H(+). It participates in pigment biosynthesis; anthocyanin biosynthesis. Functionally, UDP-glycosyltransferase which uses UDP-galactose and malvidin as substrates to catalyze the biosynthesis of malvidin 3-O-galactoside, an anthocyanin conferring purple pigmentation. The protein is Malvidin galactosylase UGT88C3 of Oryza sativa subsp. indica (Rice).